A 604-amino-acid polypeptide reads, in one-letter code: Inactive all-trans-retinol 13,14-reductase (604 aa).

Residues 1–17 (MWWILLFLEWFVDWARG) form the signal peptide.

This sequence belongs to the carotenoid/retinoid oxidoreductase family. CrtISO subfamily.

In Danio rerio (Zebrafish), this protein is Inactive all-trans-retinol 13,14-reductase (retsatl).